Here is a 667-residue protein sequence, read N- to C-terminus: MSKVHQSACPLNCWDSCGFLVTVDDGKVTKVDGDPNHPITEGKICGRGRMLETKTNSPDRLRYPMKKQNGEFVRISWEQALDEIADKLREIKETSETTAVLHSHDYANNGLLKALDQRFFNGYGGVTEIVGSICWGSGIEAQSWDFGRSYGHGPLDIYNSKHVVVWGRNVSRTNMHLYHHLQQVKKKGATITVIDPIFNPTAKLADRYISVKPGMDGWLAAAVLKVLIEMGRTDETFISEHSVGFDDVKELLKTVSLEEFIVKTETSMEELEYLAGLYADGPVSTFMGLGMQRYKNGGGTIRWIDALVAASGNVGIKGGGANFGNVQIGESFAKTKLTLPELKTTSRSFSMMTQAEEVLTAADPAIEMIIVTCGNPLTQVPNTNKVRQAFEKVPMTVAIDSIMTDTAELCDYVLPTATVFEEEDIYYSSMYHHYVQYGKKLVEPQGEAKSDSWIWSELAKRLGFGELFEYSTQEFLEMGLSSLEAEDVTLERLKEKGHLPLPVKQVPWDDYQFLTPSGKFEFTSSLAEQKGFSGSLQLNVPEESVFHNEELAGKYPYTLLSIHPQRSNHSQHVPFIEKLQHVQVDISPDIAAGQDLQDGDEVVIFNDRGSMKGKVKVMKQAHAKTINIDEGMWAAFGGSVNALTNDTNSDNGMGSTLFDCLVGLKKA.

Positions 2–59 (SKVHQSACPLNCWDSCGFLVTVDDGKVTKVDGDPNHPITEGKICGRGRMLETKTNSPD) constitute a 4Fe-4S Mo/W bis-MGD-type domain. 4 residues coordinate [4Fe-4S] cluster: Cys-9, Cys-13, Cys-17, and Cys-45.

The protein belongs to the prokaryotic molybdopterin-containing oxidoreductase family. Requires Mo-bis(molybdopterin guanine dinucleotide) as cofactor.

The chain is Probable oxidoreductase YyaE (yyaE) from Bacillus subtilis (strain 168).